The sequence spans 213 residues: Pyridoxine/pyridoxamine 5'-phosphate oxidase (213 aa).

FMN is bound by residues 60-65 (RMVLMK), 75-76 (YS), Lys82, and Gln104. Lys65 provides a ligand contact to substrate. Tyr122 and Arg126 together coordinate substrate. Residues 139–140 (QS) and Trp184 contribute to the FMN site. A substrate-binding site is contributed by 190 to 192 (RLH). Residue Arg194 participates in FMN binding.

This sequence belongs to the pyridoxamine 5'-phosphate oxidase family. As to quaternary structure, homodimer. FMN serves as cofactor.

It catalyses the reaction pyridoxamine 5'-phosphate + O2 + H2O = pyridoxal 5'-phosphate + H2O2 + NH4(+). The catalysed reaction is pyridoxine 5'-phosphate + O2 = pyridoxal 5'-phosphate + H2O2. The protein operates within cofactor metabolism; pyridoxal 5'-phosphate salvage; pyridoxal 5'-phosphate from pyridoxamine 5'-phosphate: step 1/1. It functions in the pathway cofactor metabolism; pyridoxal 5'-phosphate salvage; pyridoxal 5'-phosphate from pyridoxine 5'-phosphate: step 1/1. Functionally, catalyzes the oxidation of either pyridoxine 5'-phosphate (PNP) or pyridoxamine 5'-phosphate (PMP) into pyridoxal 5'-phosphate (PLP). The polypeptide is Pyridoxine/pyridoxamine 5'-phosphate oxidase (Bradyrhizobium diazoefficiens (strain JCM 10833 / BCRC 13528 / IAM 13628 / NBRC 14792 / USDA 110)).